A 179-amino-acid polypeptide reads, in one-letter code: ATP synthase subunit delta (179 aa).

Belongs to the ATPase delta chain family. As to quaternary structure, F-type ATPases have 2 components, F(1) - the catalytic core - and F(0) - the membrane proton channel. F(1) has five subunits: alpha(3), beta(3), gamma(1), delta(1), epsilon(1). F(0) has three main subunits: a(1), b(2) and c(10-14). The alpha and beta chains form an alternating ring which encloses part of the gamma chain. F(1) is attached to F(0) by a central stalk formed by the gamma and epsilon chains, while a peripheral stalk is formed by the delta and b chains.

The protein localises to the cell membrane. Its function is as follows. F(1)F(0) ATP synthase produces ATP from ADP in the presence of a proton or sodium gradient. F-type ATPases consist of two structural domains, F(1) containing the extramembraneous catalytic core and F(0) containing the membrane proton channel, linked together by a central stalk and a peripheral stalk. During catalysis, ATP synthesis in the catalytic domain of F(1) is coupled via a rotary mechanism of the central stalk subunits to proton translocation. Functionally, this protein is part of the stalk that links CF(0) to CF(1). It either transmits conformational changes from CF(0) to CF(1) or is implicated in proton conduction. This is ATP synthase subunit delta from Clostridium botulinum (strain ATCC 19397 / Type A).